We begin with the raw amino-acid sequence, 349 residues long: Mitomycin biosynthesis 6-O-methyltransferase (349 aa).

S-adenosyl-L-methionine is bound by residues Ser-167, Gly-190, 213 to 214 (ER), 240 to 241 (DF), and Lys-255. Residue His-259 is the Proton acceptor of the active site. Asn-288 is a binding site for substrate.

Belongs to the class I-like SAM-binding methyltransferase superfamily. Cation-independent O-methyltransferase family. COMT subfamily. Homodimer.

The enzyme catalyses 6-demethylmitomycin A + S-adenosyl-L-methionine = mitomycin A + S-adenosyl-L-homocysteine. It catalyses the reaction 6-demethylmitomycin B + S-adenosyl-L-methionine = mitomycin B + S-adenosyl-L-homocysteine. Completely inhibited by Zn(2+) and Cu(2+). Functionally, involved in the biosynthesis of the quinone methoxy group present in the mitomycin A and B, which are used as anticancer agents. In vitro, catalyzes the 6-O-methylation of both C9-beta- and C9-alpha-configured 6-hydroxymitomycins via the transfer of the S-methyl group of S-adenosyl-L-methionine (AdoMet) to the 6-demethylmitomycin A and B. It can also use hydroxyquinone as substrate. The sequence is that of Mitomycin biosynthesis 6-O-methyltransferase from Streptomyces lavendulae.